Consider the following 429-residue polypeptide: 3-phosphoshikimate 1-carboxyvinyltransferase (429 aa).

3-phosphoshikimate contacts are provided by K21, S22, and R26. Position 21 (K21) interacts with phosphoenolpyruvate. Phosphoenolpyruvate is bound by residues G94 and R122. Positions 167, 169, 315, and 342 each coordinate 3-phosphoshikimate. Residue Q169 coordinates phosphoenolpyruvate. D315 acts as the Proton acceptor in catalysis. Residues R346 and R388 each coordinate phosphoenolpyruvate.

It belongs to the EPSP synthase family. In terms of assembly, monomer.

It localises to the cytoplasm. The catalysed reaction is 3-phosphoshikimate + phosphoenolpyruvate = 5-O-(1-carboxyvinyl)-3-phosphoshikimate + phosphate. Its pathway is metabolic intermediate biosynthesis; chorismate biosynthesis; chorismate from D-erythrose 4-phosphate and phosphoenolpyruvate: step 6/7. Its function is as follows. Catalyzes the transfer of the enolpyruvyl moiety of phosphoenolpyruvate (PEP) to the 5-hydroxyl of shikimate-3-phosphate (S3P) to produce enolpyruvyl shikimate-3-phosphate and inorganic phosphate. This chain is 3-phosphoshikimate 1-carboxyvinyltransferase, found in Desulforudis audaxviator (strain MP104C).